A 497-amino-acid chain; its full sequence is Aluminum-activated malate transporter 10 (497 aa).

6 consecutive transmembrane segments (helical) span residues 66 to 86 (KVVH…FYYM), 88 to 108 (PLYD…VVVF), 123 to 143 (VVAT…ATQS), 148 to 168 (VFVI…SRFV), 173 to 193 (ARFD…SVGG), and 210 to 230 (IAIG…IWAG). Disordered stretches follow at residues 413-437 (PIET…ERTT) and 476-497 (DFEQ…PLSS). Residues 417–436 (NKPEEVPSEEENKVDSEERT) are compositionally biased toward basic and acidic residues. Residues 487–497 (DNNTKQPPLSS) show a composition bias toward polar residues.

It belongs to the aromatic acid exporter (TC 2.A.85) family.

Its subcellular location is the membrane. Malate transporter. The chain is Aluminum-activated malate transporter 10 (ALMT10) from Arabidopsis thaliana (Mouse-ear cress).